The following is a 251-amino-acid chain: Regulator of G-protein signaling 9-binding protein C (251 aa).

The Cytoplasmic segment spans residues 1-230 (MPLQNVKVAD…NSKGCCSDGQ (230 aa)). Coiled coils occupy residues 53–94 (LRDE…ELER) and 158–187 (ANKA…MKVN). The helical; Anchor for type IV membrane protein transmembrane segment at 231–250 (LIVSLLLCGTALVAITLYSI) threads the bilayer. Leu251 is a topological domain (extracellular).

It belongs to the RGS7BP/RGS9BP family.

The protein localises to the membrane. Its function is as follows. Regulator of G protein-coupled receptor (GPCR) signaling. Probably acts by regulating the activity of some 'R7' family protein (RGS6, RGS7, RGS9 and/or RGS11). In Xenopus laevis (African clawed frog), this protein is Regulator of G-protein signaling 9-binding protein C (rgs9bp-c).